We begin with the raw amino-acid sequence, 339 residues long: Small ribosomal subunit biogenesis GTPase RsgA (339 aa).

One can recognise a CP-type G domain in the interval 111-271 (MRGLLKPVAA…LIDSPGIREF (161 aa)). GTP is bound by residues 159–162 (NKAD) and 213–221 (GQSGVGKSS). Positions 295, 300, 302, and 308 each coordinate Zn(2+).

The protein belongs to the TRAFAC class YlqF/YawG GTPase family. RsgA subfamily. Monomer. Associates with 30S ribosomal subunit, binds 16S rRNA. Requires Zn(2+) as cofactor.

Its subcellular location is the cytoplasm. Functionally, one of several proteins that assist in the late maturation steps of the functional core of the 30S ribosomal subunit. Helps release RbfA from mature subunits. May play a role in the assembly of ribosomal proteins into the subunit. Circularly permuted GTPase that catalyzes slow GTP hydrolysis, GTPase activity is stimulated by the 30S ribosomal subunit. In Pseudomonas aeruginosa (strain ATCC 15692 / DSM 22644 / CIP 104116 / JCM 14847 / LMG 12228 / 1C / PRS 101 / PAO1), this protein is Small ribosomal subunit biogenesis GTPase RsgA.